The chain runs to 1324 residues: Sal-like protein 1 (1324 aa).

The interval methionine 1–alanine 42 is disordered. The segment covering proline 22–alanine 42 has biased composition (basic and acidic residues). The segment at histidine 43–cysteine 65 adopts a C2H2-type 1; atypical zinc-finger fold. Disordered stretches follow at residues asparagine 77–valine 102, valine 108–valine 127, alanine 132–isoleucine 172, and proline 317–glycine 336. A compositionally biased stretch (basic and acidic residues) spans leucine 113–serine 124. The segment covering serine 135–serine 158 has biased composition (low complexity). Residues leucine 321–glycine 336 are compositionally biased toward polar residues. Lysine 439 participates in a covalent cross-link: Glycyl lysine isopeptide (Lys-Gly) (interchain with G-Cter in SUMO2). 2 C2H2-type zinc fingers span residues histidine 449–histidine 471 and phenylalanine 477–histidine 499. The tract at residues proline 577–alanine 646 is disordered. Phosphoserine is present on residues serine 590, serine 593, and serine 595. Residues serine 633–alanine 646 are compositionally biased toward low complexity. Glycyl lysine isopeptide (Lys-Gly) (interchain with G-Cter in SUMO2) cross-links involve residues lysine 673, lysine 690, and lysine 701. C2H2-type zinc fingers lie at residues asparagine 706 to histidine 728, phenylalanine 734 to histidine 756, and histidine 766 to histidine 788. 2 disordered regions span residues glycine 790–leucine 856 and glutamate 894–threonine 963. The span at tyrosine 802–glycine 811 shows a compositional bias: polar residues. Residues aspartate 820–proline 833 show a composition bias toward acidic residues. The segment covering serine 843–leucine 856 has biased composition (low complexity). Positions threonine 899–glutamine 936 are enriched in polar residues. A compositionally biased stretch (basic and acidic residues) spans glutamate 937–glutamine 949. Residues serine 941 and serine 943 each carry the phosphoserine modification. Residues lysine 947 and lysine 982 each participate in a glycyl lysine isopeptide (Lys-Gly) (interchain with G-Cter in SUMO2) cross-link. 2 consecutive C2H2-type zinc fingers follow at residues threonine 1001–histidine 1023 and phenylalanine 1029–histidine 1051. Lysine 1086 is covalently cross-linked (Glycyl lysine isopeptide (Lys-Gly) (interchain with G-Cter in SUMO2)). The interval valine 1095–proline 1120 is disordered. Positions threonine 1105 to serine 1119 are enriched in polar residues. 2 consecutive C2H2-type zinc fingers follow at residues histidine 1134–histidine 1156 and phenylalanine 1162–histidine 1184. Residues lysine 1219, lysine 1299, and lysine 1319 each participate in a glycyl lysine isopeptide (Lys-Gly) (interchain with G-Cter in SUMO2) cross-link.

It belongs to the sal C2H2-type zinc-finger protein family. May associate with NuRD histone deacetylase complex (HDAC). Interacts with components of HDAC complex including HDAC1, HDAC2, RBBP4, RBPP7, MTA1 and MTA2. Interacts with CCNQ. Interacts with NSD2 (via PHD-type zinc fingers 1, 2 and 3). As to expression, highest levels in kidney. Lower levels in adult brain (enriched in corpus callosum, lower expression in substantia nigra) and liver.

Its subcellular location is the nucleus. Functionally, transcriptional repressor involved in organogenesis. Plays an essential role in ureteric bud invasion during kidney development. The protein is Sal-like protein 1 (SALL1) of Homo sapiens (Human).